We begin with the raw amino-acid sequence, 157 residues long: Transcriptional repressor NrdR (157 aa).

The tract at residues 1 to 21 is disordered; that stretch reads MKCPHCGNNGSRVVDSRPTDE. A zinc finger lies at 3–34; it reads CPHCGNNGSRVVDSRPTDEGRVIRRRRECEKC. Residues 49 to 139 form the ATP-cone domain; it reads LLVIKKNGSR…VYRQFKDMHV (91 aa).

Belongs to the NrdR family. The cofactor is Zn(2+).

In terms of biological role, negatively regulates transcription of bacterial ribonucleotide reductase nrd genes and operons by binding to NrdR-boxes. In Pediococcus pentosaceus (strain ATCC 25745 / CCUG 21536 / LMG 10740 / 183-1w), this protein is Transcriptional repressor NrdR.